Reading from the N-terminus, the 68-residue chain is U-reduvitoxin-Pr3a (68 aa).

An N-terminal signal peptide occupies residues 1–22 (MKAGMKLVLVLVIASIALLALA). Cystine bridges form between C29–C47, C36–C52, and C46–C59.

The protein belongs to the venom Ptu1-like knottin family. Expressed by the venom gland.

The protein resides in the secreted. Its function is as follows. Binds reversibly and blocks P/Q-type voltage-gated calcium channels (Cav). The sequence is that of U-reduvitoxin-Pr3a from Platymeris rhadamanthus (Red spot assassin bug).